The primary structure comprises 115 residues: Histone H2A-Bbd type 1 (115 aa).

Positions 1–21 are disordered; sequence MPRRRRRRGSSGAGGRGRTCS. Positions 87-115 are docking domain; that stretch reads LLDMVVHNDRLLSTLFNTTTISQVAPGED.

This sequence belongs to the histone H2A family. The nucleosome is a histone octamer containing two molecules each of H2A, H2B, H3 and H4 assembled in one H3-H4 heterotetramer and two H2A-H2B heterodimers. May be incorporated into a proportion of nucleosomes, replacing one or more H2A molecules. Present in mature sperm.

It is found in the nucleus. The protein resides in the chromosome. Atypical histone H2A which can replace conventional H2A in some nucleosomes and is associated with active transcription and mRNA processing. Nucleosomes wrap and compact DNA into chromatin, limiting DNA accessibility to the cellular machineries which require DNA as a template. Histones thereby play a central role in transcription regulation, DNA repair, DNA replication and chromosomal stability. Nucleosomes containing this histone are less rigid and organize less DNA than canonical nucleosomes in vivo. They are enriched in actively transcribed genes and associate with the elongating form of RNA polymerase. They associate with spliceosome components and are required for mRNA splicing. The chain is Histone H2A-Bbd type 1 from Homo sapiens (Human).